The primary structure comprises 222 residues: Small ribosomal subunit protein uS7m (222 aa).

This sequence belongs to the universal ribosomal protein uS7 family. As to quaternary structure, part of the small ribosomal subunit.

The protein localises to the mitochondrion. Its function is as follows. One of the primary rRNA binding proteins, it binds directly to 18S rRNA where it nucleates assembly of the head domain of the small subunit. This Prototheca wickerhamii protein is Small ribosomal subunit protein uS7m (RPS7).